A 63-amino-acid chain; its full sequence is Large ribosomal subunit protein bL32 (63 aa).

The tract at residues 1–45 (MAVQQNKKSRSRRDMRRSHDALTKPTLSVDPTTGETHLRHHMTPD) is disordered. Over residues 7–16 (KKSRSRRDMR) the composition is skewed to basic residues. Residues 25 to 35 (PTLSVDPTTGE) are compositionally biased toward polar residues.

This sequence belongs to the bacterial ribosomal protein bL32 family.

The chain is Large ribosomal subunit protein bL32 from Legionella pneumophila (strain Paris).